The primary structure comprises 186 residues: Ribosome maturation factor RimM (186 aa).

Residues 93–168 form the PRC barrel domain; that stretch reads EDDFYLVDLI…VLIDPPQEEN (76 aa). Residues 163-186 form a disordered region; that stretch reads PPQEENAPEFGRNELGHDDGGEAA. Residues 173-186 show a composition bias toward basic and acidic residues; the sequence is GRNELGHDDGGEAA.

Belongs to the RimM family. Binds ribosomal protein uS19.

The protein resides in the cytoplasm. Its function is as follows. An accessory protein needed during the final step in the assembly of 30S ribosomal subunit, possibly for assembly of the head region. Essential for efficient processing of 16S rRNA. May be needed both before and after RbfA during the maturation of 16S rRNA. It has affinity for free ribosomal 30S subunits but not for 70S ribosomes. This chain is Ribosome maturation factor RimM, found in Granulibacter bethesdensis (strain ATCC BAA-1260 / CGDNIH1).